A 199-amino-acid chain; its full sequence is GTP-binding protein Di-Ras2 (199 aa).

Residues 14-21 (GAGGVGKS), 33-39 (RESYIPT), 61-65 (DTTGS), and 121-124 (NKCD) contribute to the GTP site. Ser35 is subject to Phosphoserine. Residues 36-44 (YIPTVEDTY) carry the Effector region motif. Ser126 carries the phosphoserine modification. Residue 152–153 (AK) coordinates GTP. Cys196 bears the Cysteine methyl ester mark. Cys196 is lipidated: S-geranylgeranyl cysteine. Residues 197–199 (VIM) constitute a propeptide, removed in mature form.

This sequence belongs to the small GTPase superfamily. Di-Ras family. Post-translationally, ubiquitinated by the ECS(ASB11) complex via 'Lys-11'-linked ubiquitin chains, leading to its degradation by the proteasome.

It localises to the cell membrane. It catalyses the reaction GTP + H2O = GDP + phosphate + H(+). Its function is as follows. Displays low GTPase activity and exists predominantly in the GTP-bound form. The sequence is that of GTP-binding protein Di-Ras2 (DIRAS2) from Pongo abelii (Sumatran orangutan).